The primary structure comprises 1057 residues: Glycine dehydrogenase (decarboxylating), mitochondrial (1057 aa).

The transit peptide at 1-86 (MERARRLANR…GVGYPSQSRS (86 aa)) directs the protein to the mitochondrion. Residues 18–27 (SEAKQNRKTE) are compositionally biased toward basic and acidic residues. Residues 18–47 (SEAKQNRKTESTSTTTTTPLPFSLSGSSSR) form a disordered region. The segment covering 28–47 (STSTTTTTPLPFSLSGSSSR) has biased composition (low complexity). At Lys-792 the chain carries N6-(pyridoxal phosphate)lysine.

The protein belongs to the GcvP family. Homodimer. The glycine cleavage system is composed of four proteins: P, T, L and H. Requires pyridoxal 5'-phosphate as cofactor. As to expression, highly expressed in leaves. Detected in roots and embryos.

It localises to the mitochondrion. The enzyme catalyses N(6)-[(R)-lipoyl]-L-lysyl-[glycine-cleavage complex H protein] + glycine + H(+) = N(6)-[(R)-S(8)-aminomethyldihydrolipoyl]-L-lysyl-[glycine-cleavage complex H protein] + CO2. The glycine cleavage system catalyzes the degradation of glycine. The P protein binds the alpha-amino group of glycine through its pyridoxal phosphate cofactor; CO(2) is released and the remaining methylamine moiety is then transferred to the lipoamide cofactor of the H protein. This chain is Glycine dehydrogenase (decarboxylating), mitochondrial (GDCSP), found in Pisum sativum (Garden pea).